The following is a 1250-amino-acid chain: SRC kinase signaling inhibitor 1 (1250 aa).

A compositionally biased stretch (basic and acidic residues) spans 19–45; the sequence is AEGRARSPREEVGPRDPGGRGEPDPER. Residues 19-78 are disordered; it reads AEGRARSPREEVGPRDPGGRGEPDPERSSPPMLSADDAEYPREYRTLGGGGGGGSGGRRF. A phosphoserine mark is found at Ser47 and Ser52. The segment covering 65–75 has biased composition (gly residues); it reads LGGGGGGGSGG. Ser79 is subject to Phosphoserine. A Phosphothreonine modification is found at Thr86. Phosphoserine occurs at positions 87, 98, 211, 233, 237, 247, and 293. The residue at position 309 (Tyr309) is a Phosphotyrosine. Residues 352 to 448 are disordered; that stretch reads ASRESSPTRR…RRDVKPDEDL (97 aa). Residues 354-364 show a composition bias toward polar residues; that stretch reads RESSPTRRLNN. The segment covering 365–374 has biased composition (low complexity); sequence LSPASHLASS. Phosphoserine occurs at positions 366, 375, and 392. The segment covering 381–399 has biased composition (low complexity); the sequence is PSGLPSGLPSGSPSRSRLS. An omega-N-methylarginine mark is found at Arg397 and Arg404. Residues Ser411, Ser430, and Ser432 each carry the phosphoserine modification. A compositionally biased stretch (basic and acidic residues) spans 437-448; it reads LERRDVKPDEDL. A Phosphotyrosine modification is found at Tyr464. The tract at residues 538–710 is disordered; that stretch reads PSSPQKLADV…ASSTPAGQPT (173 aa). Residues 552–563 show a composition bias toward pro residues; sequence GGPPPPHSPYSG. Residues Ser559, Ser562, and Ser566 each carry the phosphoserine modification. The residue at position 567 (Arg567) is an Omega-N-methylarginine. Residues Ser569, Ser579, Ser581, Ser583, and Ser588 each carry the phosphoserine modification. The span at 590–607 shows a compositional bias: low complexity; the sequence is GGKARSTGSASTAGAPPS. The segment covering 628–640 has biased composition (basic and acidic residues); it reads KDTETRERMEAME. A phosphoserine mark is found at Ser664 and Ser688. 2 positions are modified to phosphothreonine: Thr691 and Thr704. The span at 701–710 shows a compositional bias: low complexity; that stretch reads ASSTPAGQPT. 2 coiled-coil regions span residues 712-753 and 793-813; these read VSRL…RALL and EELITQQLNDLEKSVEKIQRD. The tract at residues 714 to 764 is interaction with SNAP25; it reads RLQMQLHLRGLQNSASDLRGQLQQLRNVQLQNQESVRALLKPTEADVSMRV. 2 positions are modified to phosphoserine: Ser911 and Ser933. 2 disordered regions span residues 924–982 and 1016–1094; these read GLDF…ERDW and DCAS…TGEV. Thr951 is subject to Phosphothreonine. Phosphoserine is present on Ser1054. Residues 1069-1078 show a composition bias toward pro residues; sequence KSPPPPPPRR. A phosphoserine mark is found at Ser1110 and Ser1127. The interval 1155 to 1250 is disordered; it reads ELESGGSSVP…FGARNSSISF (96 aa). Residues 1217–1250 show a composition bias toward polar residues; that stretch reads PNETSSPGSEKPSGSRTSIPVLTSFGARNSSISF.

This sequence belongs to the SRCIN1 family. Interacts with the N-terminal coiled-coil region of SNAP25. Interacts with BCAR1/p130Cas and SRC through its C-terminal domain. Interacts with CSK, CTTN, SORBS3/vinexin, SYP and MAPRE3/EB3. In terms of processing, tyrosine-phosphorylated in response to EGF and to cell adhesion to integrin ligands. Expressed predominantly in central nervous system with high levels detected in cortex, cerebellum, midbrain and spinal cord (at protein level). Also expressed in testis and epithelial-rich tissues such as mammary gland, lung and kidney.

The protein localises to the cytoplasm. The protein resides in the cytoskeleton. It is found in the cell projection. It localises to the axon. Its subcellular location is the dendrite. The protein localises to the presynapse. The protein resides in the postsynapse. It is found in the postsynaptic density. Its function is as follows. Acts as a negative regulator of SRC by activating CSK which inhibits SRC activity and downstream signaling, leading to impaired cell spreading and migration. Regulates dendritic spine morphology. Involved in calcium-dependent exocytosis. May play a role in neurotransmitter release or synapse maintenance. This Mus musculus (Mouse) protein is SRC kinase signaling inhibitor 1 (Srcin1).